We begin with the raw amino-acid sequence, 383 residues long: Sulfate adenylyltransferase (383 aa).

It belongs to the sulfate adenylyltransferase family.

The catalysed reaction is sulfate + ATP + H(+) = adenosine 5'-phosphosulfate + diphosphate. It participates in sulfur metabolism; hydrogen sulfide biosynthesis; sulfite from sulfate: step 1/3. This chain is Sulfate adenylyltransferase, found in Halothermothrix orenii (strain H 168 / OCM 544 / DSM 9562).